Reading from the N-terminus, the 29-residue chain is Glucagon (29 aa).

Position 2 is a phosphoserine (S2).

The protein belongs to the glucagon family.

The protein localises to the secreted. Glucagon plays a key role in glucose metabolism and homeostasis. Regulates blood glucose by increasing gluconeogenesis and decreasing glycolysis. In Oryctolagus cuniculus (Rabbit), this protein is Glucagon (GCG).